Consider the following 238-residue polypeptide: Probable transcriptional regulatory protein MGAS10750_Spy0264 (238 aa).

It belongs to the TACO1 family. YeeN subfamily.

The protein resides in the cytoplasm. The polypeptide is Probable transcriptional regulatory protein MGAS10750_Spy0264 (Streptococcus pyogenes serotype M4 (strain MGAS10750)).